A 297-amino-acid polypeptide reads, in one-letter code: Ribosomal RNA small subunit methyltransferase H (297 aa).

Residues 35-37 (GGH), aspartate 55, phenylalanine 82, aspartate 100, and glutamine 107 each bind S-adenosyl-L-methionine.

It belongs to the methyltransferase superfamily. RsmH family.

The protein resides in the cytoplasm. The catalysed reaction is cytidine(1402) in 16S rRNA + S-adenosyl-L-methionine = N(4)-methylcytidine(1402) in 16S rRNA + S-adenosyl-L-homocysteine + H(+). Its function is as follows. Specifically methylates the N4 position of cytidine in position 1402 (C1402) of 16S rRNA. This chain is Ribosomal RNA small subunit methyltransferase H, found in Chlamydia caviae (strain ATCC VR-813 / DSM 19441 / 03DC25 / GPIC) (Chlamydophila caviae).